Consider the following 585-residue polypeptide: uncharacterized protein (585 aa).

The next 6 membrane-spanning stretches (helical) occupy residues 18–38 (FMWSLLAMLLMTAITVVYPII), 55–75 (AAWVSLGFIAVMVLKGMATFF), 128–148 (FFLSYGLAELIRFGLLVAISL), 150–170 (VMFYYSVPLTLVTIAVLPFLA), 238–258 (IWSAYFPLMEFIGNTCIVALL), and 276–296 (VAFFSLVNYMMWPIMNLGFVI). One can recognise an ABC transmembrane type-1 domain in the interval 18-301 (FMWSLLAMLL…LGFVINMFSQ (284 aa)). The 236-residue stretch at 335–570 (VHFKNVSLAY…GGYYKKIYDL (236 aa)) folds into the ABC transporter domain. Position 369 to 376 (369 to 376 (GPTGSGKS)) interacts with ATP.

Belongs to the ABC transporter superfamily.

The protein resides in the cell membrane. This is an uncharacterized protein from Bacillus subtilis (strain 168).